A 169-amino-acid polypeptide reads, in one-letter code: Glutathione peroxidase (169 aa).

The active site involves selenocysteine 43. Position 43 (selenocysteine 43) is a non-standard amino acid, selenocysteine.

Belongs to the glutathione peroxidase family.

It catalyses the reaction 2 glutathione + H2O2 = glutathione disulfide + 2 H2O. This is Glutathione peroxidase (GPX1) from Schistosoma mansoni (Blood fluke).